A 409-amino-acid polypeptide reads, in one-letter code: TM2 domain-containing protein ZK858.5 (409 aa).

The 48-residue stretch at 8–55 (VKPWIVRIILIVGGLFGAHRLYLKQVPEAFVFFSTLGVLLIGWLYDSF) folds into the TM2 domain. Helical transmembrane passes span 10–30 (PWIV…RLYL), 37–57 (FVFF…SFMF), 104–124 (VLYG…TFGW), 127–147 (INLI…IYII), 168–190 (MFIM…AIVS), and 209–229 (HFLF…LGCS).

Belongs to the TM2 family.

Its subcellular location is the membrane. In Caenorhabditis elegans, this protein is TM2 domain-containing protein ZK858.5.